The chain runs to 269 residues: 4-chlorobenzoyl coenzyme A dehalogenase (269 aa).

Substrate contacts are provided by residues R24 and 62–67 (AGFYLR). Residue H90 is the Proton acceptor of the active site. G114 provides a ligand contact to substrate. The active-site Nucleophile is D145. A substrate-binding site is contributed by R257.

Belongs to the enoyl-CoA hydratase/isomerase family. As to quaternary structure, homotetramer. Homotetramer, homooctamer and larger multimers. Homotrimer.

The enzyme catalyses 4-chlorobenzoyl-CoA + H2O = 4-hydroxybenzoyl-CoA + chloride + H(+). The protein operates within xenobiotic degradation; 4-chlorobenzoate degradation; 4-hydroxybenzoate from 4-chlorobenzoate: step 2/3. Inactivated by 1 mM Ag(+) and by 5 mM Cu(2+). Partially inhibited by 5 mM Zn(2+), Mn(2+), Co(2+), Fe(2+) and Ni(2+). Unaffected by 10 mM Na(+), K(+) and Li(+) and by 0.5 mM Mg(2+), Mn(2+), Fe(2+), Ca(2+), Co(2+) and Zn(2+). Inhibited by the sulfhydryl blocking agent 5,5'-dithio-bis-(2-nitrobenzoate), SDS and N-bromosuccinimide. Unaffected by sodium azide and EDTA. Inactivated following treatment with diethyl pyrocarbonate; this inactivation is reversible by treatment with hydroxylamine. Functionally, dehalogenates 4-chlorobenzoyl-CoA, 4-iodobenzoyl-CoA and 4-bromobenzoyl-CoA, but not 4-fluorobenzoyl-CoA. Inactive towards crotonyl-CoA, alpha-methylcrotonyl-CoA and beta-methylcrotonyl-CoA. The sequence is that of 4-chlorobenzoyl coenzyme A dehalogenase from Pseudomonas sp. (strain CBS-3).